Consider the following 141-residue polypeptide: Hemoglobin subunit alpha (141 aa).

The Globin domain maps to 1 to 141; it reads VLSAADKGNV…VSTVLTSKYR (141 aa). Serine 3 bears the Phosphoserine mark. 2 positions are modified to N6-succinyllysine: lysine 7 and lysine 11. An N6-acetyllysine; alternate modification is found at lysine 16. An N6-succinyllysine; alternate modification is found at lysine 16. Tyrosine 24 carries the post-translational modification Phosphotyrosine. Serine 35 carries the post-translational modification Phosphoserine. Lysine 40 carries the N6-succinyllysine modification. Histidine 58 contributes to the O2 binding site. Position 87 (histidine 87) interacts with heme b. The residue at position 102 (serine 102) is a Phosphoserine. At threonine 108 the chain carries Phosphothreonine. Phosphoserine is present on residues serine 124 and serine 131. Phosphothreonine is present on residues threonine 134 and threonine 137. Serine 138 bears the Phosphoserine mark.

This sequence belongs to the globin family. As to quaternary structure, heterotetramer of two alpha chains and two beta chains. As to expression, red blood cells.

Its function is as follows. Involved in oxygen transport from the lung to the various peripheral tissues. In terms of biological role, hemopressin acts as an antagonist peptide of the cannabinoid receptor CNR1. Hemopressin-binding efficiently blocks cannabinoid receptor CNR1 and subsequent signaling. This Macrotus californicus (Californian leaf-nosed bat) protein is Hemoglobin subunit alpha (HBA).